Consider the following 532-residue polypeptide: 3-hydroxy-3-methylglutaryl-coenzyme A reductase 1 (532 aa).

The chain crosses the membrane as a helical span at residues 63–83 (FATVVYLVSLFAHPDAPATTT). Residues 77-117 (DAPATTTGDDDDGQGGSRRARPAAAEPAPMHGHGGGMMEAD) form a linker region. Residues 78–111 (APATTTGDDDDGQGGSRRARPAAAEPAPMHGHGG) form a disordered region. A compositionally biased stretch (low complexity) spans 98–107 (PAAAEPAPMH). The interval 118-532 (DEEIVAAVAS…SSKDVAKAAS (415 aa)) is catalytic. The Charge relay system role is filled by Glu-211. N-linked (GlcNAc...) asparagine glycosylation occurs at Asn-275. Catalysis depends on charge relay system residues Lys-343 and Asp-419. His-517 serves as the catalytic Proton donor. Residue Asn-521 is glycosylated (N-linked (GlcNAc...) asparagine).

This sequence belongs to the HMG-CoA reductase family.

The protein localises to the endoplasmic reticulum membrane. The enzyme catalyses (R)-mevalonate + 2 NADP(+) + CoA = (3S)-3-hydroxy-3-methylglutaryl-CoA + 2 NADPH + 2 H(+). Its pathway is metabolic intermediate biosynthesis; (R)-mevalonate biosynthesis; (R)-mevalonate from acetyl-CoA: step 3/3. Its function is as follows. Catalyzes the synthesis of mevalonate. The specific precursor of all isoprenoid compounds present in plants. This Oryza sativa subsp. japonica (Rice) protein is 3-hydroxy-3-methylglutaryl-coenzyme A reductase 1 (HMG1).